The following is a 936-amino-acid chain: MutS protein homolog 4 (936 aa).

2 disordered regions span residues 1-83 (MLRP…AQGS) and 103-133 (GASS…SGYK). Over residues 7–20 (SSTSPSAPAVSPSS) the composition is skewed to low complexity. Over residues 35–55 (LQETPQSRPSVQVVSASTCPG) the composition is skewed to polar residues. Residue 680-687 (GPNMSGKS) coordinates ATP.

Belongs to the DNA mismatch repair MutS family. In terms of assembly, heterooligomer of MSH4 and MSH5. Highly expressed in testis. Also expressed in the ovary.

It localises to the chromosome. In terms of biological role, involved in meiotic recombination. Required for reciprocal recombination and proper segregation of homologous chromosomes at meiosis. This is MutS protein homolog 4 (MSH4) from Homo sapiens (Human).